The sequence spans 454 residues: UDP-N-acetylmuramate--L-alanine ligase (454 aa).

113–119 (GSHGKTT) is an ATP binding site.

It belongs to the MurCDEF family.

It is found in the cytoplasm. The catalysed reaction is UDP-N-acetyl-alpha-D-muramate + L-alanine + ATP = UDP-N-acetyl-alpha-D-muramoyl-L-alanine + ADP + phosphate + H(+). It functions in the pathway cell wall biogenesis; peptidoglycan biosynthesis. Functionally, cell wall formation. The protein is UDP-N-acetylmuramate--L-alanine ligase of Aquifex aeolicus (strain VF5).